The chain runs to 299 residues: Protease HtpX homolog (299 aa).

2 helical membrane passes run 16–36 (VMAA…YVFF) and 38–58 (SAIA…VLMI). Histidine 144 lines the Zn(2+) pocket. Residue glutamate 145 is part of the active site. Position 148 (histidine 148) interacts with Zn(2+). A run of 2 helical transmembrane segments spans residues 159 to 179 (IALA…NAFW) and 198 to 218 (VLLM…ASLV). Glutamate 227 contributes to the Zn(2+) binding site.

The protein belongs to the peptidase M48B family. Zn(2+) is required as a cofactor.

It is found in the cell membrane. This is Protease HtpX homolog from Lactiplantibacillus plantarum (strain ATCC BAA-793 / NCIMB 8826 / WCFS1) (Lactobacillus plantarum).